The sequence spans 94 residues: MREEIEKHFRIYGEEKIGKTVRFYVVPLSPESEIRKLLHLLSQSYEVGLRYQYGEMVLELKEIERKESYLTNIILFMQPSLPPQPLVQPSTVRR.

This is an uncharacterized protein from Archaeoglobus fulgidus (strain ATCC 49558 / DSM 4304 / JCM 9628 / NBRC 100126 / VC-16).